The primary structure comprises 123 residues: N(4)-acetylcytidine amidohydrolase (123 aa).

The 96-residue stretch at 6–101 (ITFYQRFEAD…EIIFWVIQFS (96 aa)) folds into the ASCH domain. Lys-21 serves as the catalytic Proton acceptor. Catalysis depends on Ser-24, which acts as the Nucleophile. Glu-74 acts as the Proton donor in catalysis.

It belongs to the N(4)-acetylcytidine amidohydrolase family.

It catalyses the reaction N(4)-acetylcytidine + H2O = cytidine + acetate + H(+). It carries out the reaction N(4)-acetyl-2'-deoxycytidine + H2O = 2'-deoxycytidine + acetate + H(+). The catalysed reaction is N(4)-acetylcytosine + H2O = cytosine + acetate + H(+). In terms of biological role, catalyzes the hydrolysis of N(4)-acetylcytidine (ac4C). The chain is N(4)-acetylcytidine amidohydrolase from Haemophilus influenzae (strain ATCC 51907 / DSM 11121 / KW20 / Rd).